Consider the following 257-residue polypeptide: MDRIIEKLDRGWWVVSHEQKLWLPGGELPHGEAVNFDLVGQHALHIGEWQGESVWMVRQDRRHDMGSLRQVLDQDPGLFQLAGRGIQLAEFYRSHKFCGYCGHPMHASKSEWAMLCSHCRERYYPQIAPCIIVAIRRDDAILLAQHTRHRNGVHTVLAGFVEVGETLEQAVAREVMEESGIRVKNLRYVTSQPWPFPQSLMTAFMADYADGEIVVDKKELLTADWYRYDDLPLLPPPGTVARRLIEDTVAMCRAEFE.

Substrate is bound at residue Arg-69. The Zn(2+) site is built by Cys-98 and Cys-101. Substrate is bound at residue Glu-111. 2 residues coordinate Zn(2+): Cys-116 and Cys-119. Position 124 (Tyr-124) interacts with substrate. One can recognise a Nudix hydrolase domain in the interval 125-248 (PQIAPCIIVA…TVARRLIEDT (124 aa)). A divalent metal cation-binding residues include Ala-158, Glu-174, and Glu-178. Residues 159 to 180 (GFVEVGETLEQAVAREVMEESG) carry the Nudix box motif. Position 192 to 199 (192 to 199 (QPWPFPQS)) interacts with substrate. Glu-219 contacts a divalent metal cation. Substrate is bound at residue Ala-241.

Belongs to the Nudix hydrolase family. NudC subfamily. In terms of assembly, homodimer. Mg(2+) is required as a cofactor. Mn(2+) serves as cofactor. Requires Zn(2+) as cofactor.

It catalyses the reaction a 5'-end NAD(+)-phospho-ribonucleoside in mRNA + H2O = a 5'-end phospho-adenosine-phospho-ribonucleoside in mRNA + beta-nicotinamide D-ribonucleotide + 2 H(+). The catalysed reaction is NAD(+) + H2O = beta-nicotinamide D-ribonucleotide + AMP + 2 H(+). It carries out the reaction NADH + H2O = reduced beta-nicotinamide D-ribonucleotide + AMP + 2 H(+). Functionally, mRNA decapping enzyme that specifically removes the nicotinamide adenine dinucleotide (NAD) cap from a subset of mRNAs by hydrolyzing the diphosphate linkage to produce nicotinamide mononucleotide (NMN) and 5' monophosphate mRNA. The NAD-cap is present at the 5'-end of some mRNAs and stabilizes RNA against 5'-processing. Has preference for mRNAs with a 5'-end purine. Catalyzes the hydrolysis of a broad range of dinucleotide pyrophosphates. This Klebsiella pneumoniae subsp. pneumoniae (strain ATCC 700721 / MGH 78578) protein is NAD-capped RNA hydrolase NudC.